Consider the following 406-residue polypeptide: Cysteine desulfurase (406 aa).

Residue Lys226 is modified to N6-(pyridoxal phosphate)lysine. Cys364 serves as the catalytic Cysteine persulfide intermediate.

It belongs to the class-V pyridoxal-phosphate-dependent aminotransferase family. Csd subfamily. Homodimer. Interacts with SufE and the SufBCD complex composed of SufB, SufC and SufD. The interaction with SufE is required to mediate the direct transfer of the sulfur atom from the S-sulfanylcysteine. Pyridoxal 5'-phosphate serves as cofactor.

Its subcellular location is the cytoplasm. The catalysed reaction is (sulfur carrier)-H + L-cysteine = (sulfur carrier)-SH + L-alanine. The enzyme catalyses L-selenocysteine + AH2 = hydrogenselenide + L-alanine + A + H(+). It functions in the pathway cofactor biosynthesis; iron-sulfur cluster biosynthesis. In terms of biological role, cysteine desulfurases mobilize the sulfur from L-cysteine to yield L-alanine, an essential step in sulfur metabolism for biosynthesis of a variety of sulfur-containing biomolecules. Component of the suf operon, which is activated and required under specific conditions such as oxidative stress and iron limitation. Acts as a potent selenocysteine lyase in vitro, that mobilizes selenium from L-selenocysteine. Selenocysteine lyase activity is however unsure in vivo. The chain is Cysteine desulfurase from Escherichia coli O17:K52:H18 (strain UMN026 / ExPEC).